A 255-amino-acid polypeptide reads, in one-letter code: 5'-nucleotidase SurE (255 aa).

The a divalent metal cation site is built by aspartate 8, aspartate 9, serine 39, and asparagine 91.

Belongs to the SurE nucleotidase family. Requires a divalent metal cation as cofactor.

It localises to the cytoplasm. It catalyses the reaction a ribonucleoside 5'-phosphate + H2O = a ribonucleoside + phosphate. Its function is as follows. Nucleotidase that shows phosphatase activity on nucleoside 5'-monophosphates. This is 5'-nucleotidase SurE from Nitrosospira multiformis (strain ATCC 25196 / NCIMB 11849 / C 71).